A 236-amino-acid chain; its full sequence is 2-C-methyl-D-erythritol 4-phosphate cytidylyltransferase (236 aa).

This sequence belongs to the IspD/TarI cytidylyltransferase family. IspD subfamily. Homodimer.

The catalysed reaction is 2-C-methyl-D-erythritol 4-phosphate + CTP + H(+) = 4-CDP-2-C-methyl-D-erythritol + diphosphate. It functions in the pathway isoprenoid biosynthesis; isopentenyl diphosphate biosynthesis via DXP pathway; isopentenyl diphosphate from 1-deoxy-D-xylulose 5-phosphate: step 2/6. Functionally, catalyzes the formation of 4-diphosphocytidyl-2-C-methyl-D-erythritol from CTP and 2-C-methyl-D-erythritol 4-phosphate (MEP). This chain is 2-C-methyl-D-erythritol 4-phosphate cytidylyltransferase, found in Escherichia coli O45:K1 (strain S88 / ExPEC).